Reading from the N-terminus, the 553-residue chain is Arginine--tRNA ligase (553 aa).

A 'HIGH' region motif is present at residues 130 to 140 (ANPTGDLHIGH).

This sequence belongs to the class-I aminoacyl-tRNA synthetase family. Monomer.

The protein localises to the cytoplasm. It carries out the reaction tRNA(Arg) + L-arginine + ATP = L-arginyl-tRNA(Arg) + AMP + diphosphate. The protein is Arginine--tRNA ligase of Staphylococcus aureus (strain MSSA476).